A 156-amino-acid chain; its full sequence is Zinc metalloproteinase-disintegrin jararin (156 aa).

One can recognise a Peptidase M12B domain in the interval 1-67; that stretch reads FVANRMAHEL…NYYGCLLNEP (67 aa). Residue His-8 participates in Zn(2+) binding. Residue Glu-9 is part of the active site. A Zn(2+)-binding site is contributed by His-12. 9 cysteine pairs are disulfide-bonded: Cys-23/Cys-47, Cys-25/Cys-30, Cys-78/Cys-97, Cys-89/Cys-107, Cys-91/Cys-102, Cys-101/Cys-124, Cys-115/Cys-121, Cys-120/Cys-145, and Cys-133/Cys-152. A Disintegrin domain is found at 75 to 156; it reads PPFCGNYYPE…GQSGDCPRNS (82 aa). Residues 136 to 145 show a composition bias toward basic and acidic residues; it reads GRGDNPDDRC. Positions 136–156 are disordered; it reads GRGDNPDDRCTGQSGDCPRNS. Positions 137-139 match the Cell attachment site motif; that stretch reads RGD. The span at 146–156 shows a compositional bias: polar residues; sequence TGQSGDCPRNS.

This sequence belongs to the venom metalloproteinase (M12B) family. P-II subfamily. P-IIb sub-subfamily. As to quaternary structure, monomer. Requires Zn(2+) as cofactor. As to expression, expressed by the venom gland.

The protein localises to the secreted. Its function is as follows. Snake venom zinc metalloproteinase that inhibits ADP-induced platelet aggregation (probably by binding integrin alpha-IIb/beta-3 (ITGA2B/ITGB3)) and degrades fibrinogen. This chain is Zinc metalloproteinase-disintegrin jararin, found in Bothrops jararaca (Jararaca).